A 108-amino-acid polypeptide reads, in one-letter code: Con-Ins K1 (108 aa).

The first 24 residues, 1–24 (MTTSSYFLLVALGLLLYVCQSSFG), serve as a signal peptide directing secretion. Positions 25–28 (SPHT) are excised as a propeptide. Cystine bridges form between cysteine 41–cysteine 90, cysteine 53–cysteine 103, and cysteine 89–cysteine 94. Glutamate 44 carries the post-translational modification 4-carboxyglutamate. The propeptide at 57-83 (RKRRGFPSMLKARAKRNEAFLLQRDGR) is c peptide. Glutamate 87 carries the post-translational modification 4-carboxyglutamate. Glutamine amide is present on glutamine 107.

The protein belongs to the insulin family. In terms of assembly, heterodimer of A and B chains; disulfide-linked. As to expression, expressed by the venom gland.

It localises to the secreted. Functionally, this venom insulin, from a fish-hunting cone snail, facilitates prey capture by rapidly inducing hypoglycemic shock. It is one of the smallest known insulin found in nature and lacks the C-terminal segment of the B chain that, in human insulin, mediates engagement of the insulin receptor (INSR) and assembly of the hormone's hexameric storage form. Despite lacking this segment, it both binds and activates human insulin receptor (long isoform (HIR-B)) with a moderate potency (EC(50)=30.45 nM). In vivo, intraperitoneal injection of this peptide into zebrafish lowers blood glucose with a lower potency than human insulin. In addition, when applied to water, this peptide reduces overall locomotor activity of zebrafish larvae, observed as a significant decrease in the percentage of time spent swimming and movement frequency. When tested on a mouse model of diabetes, this insulin also lowers blood glucose with a 20-fold lower potency than human insulin. The sequence is that of Con-Ins K1 from Conus kinoshitai (Kinoshita's cone).